The following is a 180-amino-acid chain: Large ribosomal subunit protein uL5 (180 aa).

The protein belongs to the universal ribosomal protein uL5 family. Part of the 50S ribosomal subunit; part of the 5S rRNA/L5/L18/L25 subcomplex. Contacts the 5S rRNA and the P site tRNA. Forms a bridge to the 30S subunit in the 70S ribosome.

This is one of the proteins that bind and probably mediate the attachment of the 5S RNA into the large ribosomal subunit, where it forms part of the central protuberance. In the 70S ribosome it contacts protein S13 of the 30S subunit (bridge B1b), connecting the 2 subunits; this bridge is implicated in subunit movement. Contacts the P site tRNA; the 5S rRNA and some of its associated proteins might help stabilize positioning of ribosome-bound tRNAs. This is Large ribosomal subunit protein uL5 from Streptococcus mutans serotype c (strain ATCC 700610 / UA159).